Here is a 106-residue protein sequence, read N- to C-terminus: Thioredoxin-2 (106 aa).

A Thioredoxin domain is found at 2–106 (VYQIKDKADL…RLEDVIKANI (105 aa)). Residues Cys-32 and Cys-35 each act as nucleophile in the active site. An intrachain disulfide couples Cys-32 to Cys-35.

The protein belongs to the thioredoxin family.

Participates in various redox reactions through the reversible oxidation of its active center dithiol to a disulfide and catalyzes dithiol-disulfide exchange reactions. As a reducing substrate of peroxiredoxin 1, thioredoxin 2 is preferred over thioredoxin 1. The chain is Thioredoxin-2 from Drosophila yakuba (Fruit fly).